A 463-amino-acid polypeptide reads, in one-letter code: Thiamine-repressible acid phosphatase pho4 (463 aa).

The signal sequence occupies residues 1 to 18; it reads MKLSGISLWLLAASIVHA. The active-site Nucleophile is His69. 6 N-linked (GlcNAc...) asparagine glycosylation sites follow: Asn98, Asn104, Asn186, Asn221, Asn251, and Asn328. The Proton donor role is filled by Asp341. Asn433, Asn439, and Asn458 each carry an N-linked (GlcNAc...) asparagine glycan.

The protein belongs to the histidine acid phosphatase family.

Its subcellular location is the secreted. It is found in the cell wall. The catalysed reaction is a phosphate monoester + H2O = an alcohol + phosphate. In terms of biological role, may dephosphorylate thiamine phosphates. This chain is Thiamine-repressible acid phosphatase pho4 (pho4), found in Schizosaccharomyces pombe (strain 972 / ATCC 24843) (Fission yeast).